A 408-amino-acid chain; its full sequence is RNA-splicing ligase RtcB1 (408 aa).

Residues Asp75, Cys78, His168, His185, and His281 each contribute to the Mn(2+) site. GMP is bound at residue 167–171 (NHFIE). Residues 281–282 (HN), 313–316 (PGSM), Ser320, 337–340 (HGAG), and Lys407 each bind GMP. His337 acts as the GMP-histidine intermediate in catalysis.

It belongs to the RtcB family. Monomer. Requires Mn(2+) as cofactor.

The enzyme catalyses a 3'-end 3'-phospho-ribonucleotide-RNA + a 5'-end dephospho-ribonucleoside-RNA + GTP = a ribonucleotidyl-ribonucleotide-RNA + GMP + diphosphate. The catalysed reaction is a 3'-end 2',3'-cyclophospho-ribonucleotide-RNA + a 5'-end dephospho-ribonucleoside-RNA + GTP + H2O = a ribonucleotidyl-ribonucleotide-RNA + GMP + diphosphate + H(+). Its function is as follows. GTP-dependent RNA ligase that is involved in RNA repair. Joins RNA with 2',3'-cyclic-phosphate or 3'-phosphate ends to RNA with 5'-hydroxy ends. GTP-dependent RNA ligase that is involved in tRNA repair. Repairs broken tRNA(Asp) and tRNA(Arg) that have been cleaved by colicin E5 or colicin D, respectively. Does not repair damaged 16S rRNA in 30S ribosomal subunits. The chain is RNA-splicing ligase RtcB1 from Escherichia coli (strain ATCC 25922 / DSM 1103 / LMG 8223 / NCIMB 12210 / NCTC 12241 / WDCM 00013 / Seattle 1946).